The primary structure comprises 456 residues: UDP-N-acetylglucosamine 1-carboxyvinyltransferase (456 aa).

34 to 35 provides a ligand contact to phosphoenolpyruvate; sequence KN. UDP-N-acetyl-alpha-D-glucosamine is bound at residue Arg104. The active-site Proton donor is the Cys128. Position 128 is a 2-(S-cysteinyl)pyruvic acid O-phosphothioketal (Cys128). Positions 319 and 341 each coordinate UDP-N-acetyl-alpha-D-glucosamine.

Belongs to the EPSP synthase family. MurA subfamily.

The protein resides in the cytoplasm. It carries out the reaction phosphoenolpyruvate + UDP-N-acetyl-alpha-D-glucosamine = UDP-N-acetyl-3-O-(1-carboxyvinyl)-alpha-D-glucosamine + phosphate. It functions in the pathway cell wall biogenesis; peptidoglycan biosynthesis. Cell wall formation. Adds enolpyruvyl to UDP-N-acetylglucosamine. The sequence is that of UDP-N-acetylglucosamine 1-carboxyvinyltransferase from Prochlorococcus marinus (strain MIT 9312).